The chain runs to 307 residues: Ribosomal protein L11 methyltransferase (307 aa).

4 residues coordinate S-adenosyl-L-methionine: T162, G183, D205, and N244.

The protein belongs to the methyltransferase superfamily. PrmA family.

The protein resides in the cytoplasm. It catalyses the reaction L-lysyl-[protein] + 3 S-adenosyl-L-methionine = N(6),N(6),N(6)-trimethyl-L-lysyl-[protein] + 3 S-adenosyl-L-homocysteine + 3 H(+). Its function is as follows. Methylates ribosomal protein L11. This is Ribosomal protein L11 methyltransferase from Bordetella parapertussis (strain 12822 / ATCC BAA-587 / NCTC 13253).